A 730-amino-acid polypeptide reads, in one-letter code: Elongation factor 2 (730 aa).

The tr-type G domain occupies 19–260; that stretch reads EKIRNIGIVA…MVIRFLPNPL (242 aa). GTP-binding positions include 28-35, 94-98, and 148-151; these read AHIDHGKT, DTPGH, and NKVD. At H596 the chain carries Diphthamide.

This sequence belongs to the TRAFAC class translation factor GTPase superfamily. Classic translation factor GTPase family. EF-G/EF-2 subfamily.

It localises to the cytoplasm. In terms of biological role, catalyzes the GTP-dependent ribosomal translocation step during translation elongation. During this step, the ribosome changes from the pre-translocational (PRE) to the post-translocational (POST) state as the newly formed A-site-bound peptidyl-tRNA and P-site-bound deacylated tRNA move to the P and E sites, respectively. Catalyzes the coordinated movement of the two tRNA molecules, the mRNA and conformational changes in the ribosome. This Methanosarcina thermophila protein is Elongation factor 2 (fusA).